Consider the following 858-residue polypeptide: Autoinducer 2 sensor kinase/phosphatase LuxQ (858 aa).

2 consecutive transmembrane segments (helical) span residues 14 to 34 and 362 to 382; these read STLI…GIFV and LFNF…LIQI. Residues 488 to 710 form the Histidine kinase domain; sequence KMSHEIRTPI…TFVVTLPVKD (223 aa). His-491 carries the post-translational modification Phosphohistidine; by autocatalysis. The Response regulatory domain maps to 735–850; sequence KVLLVEDNHT…ALHEAFVDFK (116 aa). Asp-784 is subject to 4-aspartylphosphate.

In terms of assembly, binds the complex formed by the autoinducer and LuxP.

The protein resides in the cell inner membrane. The enzyme catalyses ATP + protein L-histidine = ADP + protein N-phospho-L-histidine.. Its function is as follows. At low cell density, in absence of autoinducer has a kinase activity, and autophosphorylates on a histidine residue. The phosphoryl group is then transferred to an aspartate residue in the response regulator domain. The phosphoryl group is transferred to LuxU, and ultimately to LuxO. At high cell density, in the presence of autoinducer, the kinase activity is inactivated, and the response regulator domain has a phosphatase activity. This chain is Autoinducer 2 sensor kinase/phosphatase LuxQ (luxQ), found in Vibrio parahaemolyticus serotype O3:K6 (strain RIMD 2210633).